Here is a 316-residue protein sequence, read N- to C-terminus: tRNA dimethylallyltransferase (316 aa).

17–24 (GPTASGKT) is a binding site for ATP. 19-24 (TASGKT) is a binding site for substrate. 4 interaction with substrate tRNA regions span residues 42 to 45 (DSAL), 166 to 170 (QRLSR), 247 to 252 (RCVGYR), and 280 to 287 (KRQITWLR).

The protein belongs to the IPP transferase family. As to quaternary structure, monomer. Requires Mg(2+) as cofactor.

It carries out the reaction adenosine(37) in tRNA + dimethylallyl diphosphate = N(6)-dimethylallyladenosine(37) in tRNA + diphosphate. Its function is as follows. Catalyzes the transfer of a dimethylallyl group onto the adenine at position 37 in tRNAs that read codons beginning with uridine, leading to the formation of N6-(dimethylallyl)adenosine (i(6)A). The protein is tRNA dimethylallyltransferase of Escherichia coli O6:K15:H31 (strain 536 / UPEC).